A 289-amino-acid polypeptide reads, in one-letter code: Glycine--tRNA ligase alpha subunit (289 aa).

This sequence belongs to the class-II aminoacyl-tRNA synthetase family. As to quaternary structure, tetramer of two alpha and two beta subunits.

It is found in the cytoplasm. The catalysed reaction is tRNA(Gly) + glycine + ATP = glycyl-tRNA(Gly) + AMP + diphosphate. The polypeptide is Glycine--tRNA ligase alpha subunit (Prochlorococcus marinus subsp. pastoris (strain CCMP1986 / NIES-2087 / MED4)).